A 67-amino-acid chain; its full sequence is Beta-mammal toxin CeII9 (67 aa).

One can recognise an LCN-type CS-alpha/beta domain in the interval 1–66 (KEGYLVNHST…VWPLPKKTCN (66 aa)). Intrachain disulfides connect cysteine 12–cysteine 65, cysteine 16–cysteine 41, cysteine 25–cysteine 46, and cysteine 29–cysteine 48.

Belongs to the long (4 C-C) scorpion toxin superfamily. Sodium channel inhibitor family. Beta subfamily. In terms of tissue distribution, expressed by the venom gland.

The protein resides in the secreted. Its function is as follows. Beta toxins bind at site-4 of sodium channels and shift the voltage of activation toward more negative potentials thereby affecting sodium channel activation and promoting spontaneous and repetitive firing. This toxin is active against mammals and lethal to mice. Selectively modulates Nav1.4/SCN4A, a sodium channel present in both denervated and innervated skeletal muscle. The protein is Beta-mammal toxin CeII9 of Centruroides elegans (Bark scorpion).